The primary structure comprises 270 residues: Regulatory protein RecX (270 aa).

It belongs to the RecX family.

Its subcellular location is the cytoplasm. Its function is as follows. Modulates RecA activity. This Bacillus thuringiensis subsp. konkukian (strain 97-27) protein is Regulatory protein RecX.